The primary structure comprises 700 residues: AP-1-like transcription factor yap1 (700 aa).

Disordered regions lie at residues 17-185 (SPGH…KDLE) and 228-296 (MPVN…VSLR). The short motif at 34–41 (MPVPGRDT) is the Bipartite nuclear localization signal element. A compositionally biased stretch (polar residues) spans 47–59 (PSVSNGSQPSAHQ). The Bipartite nuclear localization signal motif lies at 67–74 (SPTPEMPP). The span at 103 to 112 (LDDDDDDASD) shows a compositional bias: acidic residues. Positions 127–138 (AGRAAAASASGS) are enriched in low complexity. Basic and acidic residues predominate over residues 150–185 (GDGKRELSKSERRKEQNRAAQKAFRERREAKVKDLE). The bZIP domain maps to 156–219 (LSKSERRKEQ…KRLQEENVAL (64 aa)). Residues 158-182 (KSERRKEQNRAAQKAFRERREAKVK) are basic motif. The leucine-zipper stretch occupies residues 184–191 (LEDKVAEL). Transcription activation regions lie at residues 213–400 (QEEN…QPDS) and 452–577 (LGAT…GRGN). Positions 231 to 244 (NSRNSPNSNNGSFS) are enriched in low complexity. The segment covering 280–296 (SANTISDNSSESLVSLR) has biased composition (polar residues). The tract at residues 306–318 (FSDHFNTYALGVV) is n-CRD. 2 disordered regions span residues 320 to 359 (VPPP…PSAD) and 542 to 609 (NYLN…KATT). 2 stretches are compositionally biased toward low complexity: residues 335-358 (SASN…PPSA) and 542-573 (NYLN…NVSS). The segment covering 589–607 (MGSSRTSVSHDSTDLQGKA) has biased composition (polar residues). A c-CRD region spans residues 642 to 675 (PSELWMRFGMQHENSTEHLLIDDLCDQMRAKATC). A Nuclear export signal motif is present at residues 660–667 (LLIDDLCD). Cysteine 666 and cysteine 675 are disulfide-bonded.

It belongs to the bZIP family. YAP subfamily. Post-translationally, depending on the oxidative stress inducing agent, yap1 can undergo two distinct conformational changes, both involving disulfide bond formation, and both masking the nuclear export signal, thus abolishing nuclear export.

It is found in the nucleus. It localises to the cytoplasm. Functionally, transcription activator involved in oxidative stress response and redox homeostasis. Regulates the transcription of genes encoding antioxidant enzymes and components of the cellular thiol-reducing pathways. Involved in antifungal resistance to fluconazole. This is AP-1-like transcription factor yap1 from Cryptococcus neoformans var. grubii serotype A (strain H99 / ATCC 208821 / CBS 10515 / FGSC 9487) (Filobasidiella neoformans var. grubii).